A 274-amino-acid chain; its full sequence is 3',5'-cyclic adenosine monophosphate phosphodiesterase CpdA (274 aa).

D21, H23, D63, N93, H163, H202, and H204 together coordinate Fe cation. AMP is bound by residues H23, D63, and 93–94 (NH). H204 serves as a coordination point for AMP.

The protein belongs to the cyclic nucleotide phosphodiesterase class-III family. It depends on Fe(2+) as a cofactor.

The enzyme catalyses 3',5'-cyclic AMP + H2O = AMP + H(+). Functionally, hydrolyzes cAMP to 5'-AMP. Plays an important regulatory role in modulating the intracellular concentration of cAMP, thereby influencing cAMP-dependent processes. This Vibrio vulnificus (strain CMCP6) protein is 3',5'-cyclic adenosine monophosphate phosphodiesterase CpdA.